The chain runs to 382 residues: Histidinol-phosphate aminotransferase (382 aa).

The disordered stretch occupies residues Met-1–Ala-28. The span at Pro-9–Gly-22 shows a compositional bias: basic and acidic residues. An N6-(pyridoxal phosphate)lysine modification is found at Lys-233.

It belongs to the class-II pyridoxal-phosphate-dependent aminotransferase family. Histidinol-phosphate aminotransferase subfamily. As to quaternary structure, homodimer. Pyridoxal 5'-phosphate is required as a cofactor.

The catalysed reaction is L-histidinol phosphate + 2-oxoglutarate = 3-(imidazol-4-yl)-2-oxopropyl phosphate + L-glutamate. It participates in amino-acid biosynthesis; L-histidine biosynthesis; L-histidine from 5-phospho-alpha-D-ribose 1-diphosphate: step 7/9. The protein is Histidinol-phosphate aminotransferase of Mycobacterium marinum (strain ATCC BAA-535 / M).